Here is a 37-residue protein sequence, read N- to C-terminus: Large ribosomal subunit protein bL36 (37 aa).

The protein belongs to the bacterial ribosomal protein bL36 family.

The chain is Large ribosomal subunit protein bL36 from Nostoc punctiforme (strain ATCC 29133 / PCC 73102).